The sequence spans 180 residues: Endoribonuclease YbeY (180 aa).

Residues His149, His153, and His159 each contribute to the Zn(2+) site.

The protein belongs to the endoribonuclease YbeY family. The cofactor is Zn(2+).

It localises to the cytoplasm. Its function is as follows. Single strand-specific metallo-endoribonuclease involved in late-stage 70S ribosome quality control and in maturation of the 3' terminus of the 16S rRNA. In Prochlorococcus marinus (strain MIT 9515), this protein is Endoribonuclease YbeY.